We begin with the raw amino-acid sequence, 179 residues long: Large ribosomal subunit protein uL5c (179 aa).

The protein belongs to the universal ribosomal protein uL5 family. As to quaternary structure, part of the 50S ribosomal subunit; contacts the 5S rRNA.

Its subcellular location is the plastid. It is found in the organellar chromatophore. In terms of biological role, binds 5S rRNA, forms part of the central protuberance of the 50S subunit. In Paulinella chromatophora, this protein is Large ribosomal subunit protein uL5c (rpl5).